A 244-amino-acid polypeptide reads, in one-letter code: Small ribosomal subunit protein uS3 (244 aa).

In terms of domain architecture, KH type-2 spans 39-107; that stretch reads MRKFVMSELK…ETHLNIVEVR (69 aa). Positions 214–244 are disordered; it reads ASERRALEGDAQGPASRERDRGDRRRERDNA. A compositionally biased stretch (basic and acidic residues) spans 229 to 244; the sequence is SRERDRGDRRRERDNA.

It belongs to the universal ribosomal protein uS3 family. Part of the 30S ribosomal subunit. Forms a tight complex with proteins S10 and S14.

Functionally, binds the lower part of the 30S subunit head. Binds mRNA in the 70S ribosome, positioning it for translation. The protein is Small ribosomal subunit protein uS3 of Rhizobium etli (strain CIAT 652).